The sequence spans 446 residues: Tubulin beta-8 chain (446 aa).

Positions 11, 69, 138, 142, 143, 144, 204, and 226 each coordinate GTP. Mg(2+) is bound at residue Glu69. The disordered stretch occupies residues 426-446; that stretch reads QDATAEDDYDEDDDAAAADEA. Residues 429–446 show a composition bias toward acidic residues; it reads TAEDDYDEDDDAAAADEA.

Belongs to the tubulin family. As to quaternary structure, dimer of alpha and beta chains. A typical microtubule is a hollow water-filled tube with an outer diameter of 25 nm and an inner diameter of 15 nM. Alpha-beta heterodimers associate head-to-tail to form protofilaments running lengthwise along the microtubule wall with the beta-tubulin subunit facing the microtubule plus end conferring a structural polarity. Microtubules usually have 13 protofilaments but different protofilament numbers can be found in some organisms and specialized cells. Mg(2+) serves as cofactor. As to expression, expressed in anthers.

The protein localises to the cytoplasm. It localises to the cytoskeleton. Tubulin is the major constituent of microtubules, a cylinder consisting of laterally associated linear protofilaments composed of alpha- and beta-tubulin heterodimers. Microtubules grow by the addition of GTP-tubulin dimers to the microtubule end, where a stabilizing cap forms. Below the cap, tubulin dimers are in GDP-bound state, owing to GTPase activity of alpha-tubulin. The sequence is that of Tubulin beta-8 chain (TUBB8) from Oryza sativa subsp. japonica (Rice).